We begin with the raw amino-acid sequence, 120 residues long: Dihydroneopterin aldolase (120 aa).

Residues glutamate 21, tyrosine 53, and 72 to 73 (VE) each bind substrate. Lysine 99 acts as the Proton donor/acceptor in catalysis.

The protein belongs to the DHNA family.

It catalyses the reaction 7,8-dihydroneopterin = 6-hydroxymethyl-7,8-dihydropterin + glycolaldehyde. It functions in the pathway cofactor biosynthesis; tetrahydrofolate biosynthesis; 2-amino-4-hydroxy-6-hydroxymethyl-7,8-dihydropteridine diphosphate from 7,8-dihydroneopterin triphosphate: step 3/4. Its function is as follows. Catalyzes the conversion of 7,8-dihydroneopterin to 6-hydroxymethyl-7,8-dihydropterin. This chain is Dihydroneopterin aldolase (folB), found in Bacillus subtilis (strain 168).